The chain runs to 296 residues: Bifunctional protein FolD 1/3 (296 aa).

NADP(+)-binding positions include 166 to 168 (GRS), Ser191, and Ile232.

Belongs to the tetrahydrofolate dehydrogenase/cyclohydrolase family. Homodimer.

The catalysed reaction is (6R)-5,10-methylene-5,6,7,8-tetrahydrofolate + NADP(+) = (6R)-5,10-methenyltetrahydrofolate + NADPH. It catalyses the reaction (6R)-5,10-methenyltetrahydrofolate + H2O = (6R)-10-formyltetrahydrofolate + H(+). The protein operates within one-carbon metabolism; tetrahydrofolate interconversion. Catalyzes the oxidation of 5,10-methylenetetrahydrofolate to 5,10-methenyltetrahydrofolate and then the hydrolysis of 5,10-methenyltetrahydrofolate to 10-formyltetrahydrofolate. This chain is Bifunctional protein FolD 1/3, found in Ruegeria pomeroyi (strain ATCC 700808 / DSM 15171 / DSS-3) (Silicibacter pomeroyi).